We begin with the raw amino-acid sequence, 211 residues long: Small ribosomal subunit protein uS5 (211 aa).

In terms of domain architecture, S5 DRBM spans 58–121 (FEERIVKLKR…KKAHNSIHTV (64 aa)).

Belongs to the universal ribosomal protein uS5 family. Part of the 30S ribosomal subunit. Contacts proteins S4 and S8.

In terms of biological role, with S4 and S12 plays an important role in translational accuracy. Functionally, located at the back of the 30S subunit body where it stabilizes the conformation of the head with respect to the body. The chain is Small ribosomal subunit protein uS5 from Mycoplasma genitalium (strain ATCC 33530 / DSM 19775 / NCTC 10195 / G37) (Mycoplasmoides genitalium).